Consider the following 91-residue polypeptide: VDAELLADGKKVFAGNCAACHLGGNNSVLADKTLKKDAIEKYLEGGLTLEAIKYQVNNGKGAMPAWADRLDEDDIEAVSNYVYDQAVNSKW.

Residues C17, C20, H21, and M63 each contribute to the heme c site.

The protein belongs to the cytochrome c family. PetJ subfamily. As to quaternary structure, monomer. Binds 1 heme c group covalently per subunit.

Its subcellular location is the plastid. It is found in the chloroplast thylakoid lumen. In terms of biological role, functions as an electron carrier between membrane-bound cytochrome b6-f and photosystem I in oxygenic photosynthesis. The polypeptide is Cytochrome c6 (petJ) (Cladophora glomerata).